Reading from the N-terminus, the 922-residue chain is Protein translocase subunit SecA (922 aa).

Residues glutamine 87, 105–109 (GEGKT), and aspartate 516 each bind ATP. The segment at 867–912 (YTAPTETGEPETLPDPRTAGAGGDGLNLPEGVRIGRNDPCPCGSGK) is disordered. Positions 906, 908, 917, and 918 each coordinate Zn(2+).

Belongs to the SecA family. Monomer and homodimer. Part of the essential Sec protein translocation apparatus which comprises SecA, SecYEG and auxiliary proteins SecDF-YajC and YidC. Requires Zn(2+) as cofactor.

The protein localises to the cell inner membrane. The protein resides in the cytoplasm. The enzyme catalyses ATP + H2O + cellular proteinSide 1 = ADP + phosphate + cellular proteinSide 2.. Functionally, part of the Sec protein translocase complex. Interacts with the SecYEG preprotein conducting channel. Has a central role in coupling the hydrolysis of ATP to the transfer of proteins into and across the cell membrane, serving both as a receptor for the preprotein-SecB complex and as an ATP-driven molecular motor driving the stepwise translocation of polypeptide chains across the membrane. The sequence is that of Protein translocase subunit SecA from Paracidovorax citrulli (strain AAC00-1) (Acidovorax citrulli).